A 446-amino-acid polypeptide reads, in one-letter code: Exodeoxyribonuclease 7 large subunit (446 aa).

The protein belongs to the XseA family. In terms of assembly, heterooligomer composed of large and small subunits.

Its subcellular location is the cytoplasm. It catalyses the reaction Exonucleolytic cleavage in either 5'- to 3'- or 3'- to 5'-direction to yield nucleoside 5'-phosphates.. Functionally, bidirectionally degrades single-stranded DNA into large acid-insoluble oligonucleotides, which are then degraded further into small acid-soluble oligonucleotides. The protein is Exodeoxyribonuclease 7 large subunit of Streptococcus pneumoniae serotype 19F (strain G54).